Reading from the N-terminus, the 310-residue chain is Transcription initiation factor IIA subunit 1 (310 aa).

3 disordered regions span residues 52–78 (AISN…LSTV), 91–197 (IQLN…NNKD), and 218–261 (VIPQ…DDPD). Composition is skewed to low complexity over residues 62–77 (TTAT…TLST) and 122–160 (SNGT…PSSL). 3 stretches are compositionally biased toward acidic residues: residues 173 to 183 (TLDESDNDDDN), 225 to 236 (LNDDDDLDDEEI), and 246 to 261 (DSLG…DDPD).

Belongs to the TFIIA subunit 1 family. TFIIA is a heterodimer of the large subunit 1 and a small subunit gamma.

The protein resides in the nucleus. Its function is as follows. TFIIA is a component of the transcription machinery of RNA polymerase II and plays an important role in transcriptional activation. TFIIA in a complex with tbp mediates transcriptional activity. This is Transcription initiation factor IIA subunit 1 (gtf2a1) from Dictyostelium discoideum (Social amoeba).